Here is a 279-residue protein sequence, read N- to C-terminus: Peptide deformylase 1B, chloroplastic (279 aa).

Fe cation is bound by residues C177 and H219. E220 is a catalytic residue. H223 contributes to the Fe cation binding site.

This sequence belongs to the polypeptide deformylase family. It depends on Fe(2+) as a cofactor.

The protein localises to the plastid. The protein resides in the chloroplast. The catalysed reaction is N-terminal N-formyl-L-methionyl-[peptide] + H2O = N-terminal L-methionyl-[peptide] + formate. Removes the formyl group from the N-terminal Met of newly synthesized proteins. This is Peptide deformylase 1B, chloroplastic (PDF1B) from Solanum lycopersicum (Tomato).